The following is a 1818-amino-acid chain: Nestin (1818 aa).

The interval 1–14 (WREKLEAEVQRQNL) is coil 1B. Residues 1–135 (WREKLEAEVQ…TLLEAENSRL (135 aa)) form the IF rod domain. The segment at 15–17 (YQE) is linker 2. The coil 2B stretch occupies residues 18–135 (RVAHMESSLG…TLLEAENSRL (118 aa)). At S133 the chain carries Phosphoserine. The tail stretch occupies residues 136-1818 (QTPGRSSQAS…DRDSWSSGED (1683 aa)). A phosphothreonine mark is found at T137 and T160. The residue at position 180 (S180) is a Phosphoserine. T210 carries the post-translational modification Phosphothreonine. Disordered stretches follow at residues 266-309 (EEAG…GSSI), 336-355 (AQETQEDGLHTEEIQDSQGP), 377-451 (HETP…SPEG), and 480-787 (AFKK…EEDQ). S288 bears the Phosphoserine mark. Basic and acidic residues predominate over residues 292–303 (PVLEAKDGDSTE). Positions 382-398 (KENCNSLRSVDENQGTL) are enriched in polar residues. 2 positions are modified to phosphoserine: S390 and S400. Basic and acidic residues-rich tracts occupy residues 400 to 427 (SPEEEKQTLLKSLEEKDVEVEKTLEKGV) and 434 to 443 (LGKEDPRIED). S448 bears the Phosphoserine mark. The span at 495 to 508 (EIQRVERLIEKEGQ) shows a compositional bias: basic and acidic residues. A Phosphoserine modification is found at S513. 2 stretches are compositionally biased toward basic and acidic residues: residues 521–536 (TDRPLEKENGEPLKPV) and 565–586 (TDRPLEKEEDQLVERLVEKEGQ). Position 591 is a phosphoserine (S591). Basic and acidic residues-rich tracts occupy residues 599–614 (TDRPLEKENGEPLKPV), 643–664 (TDRPLEKEEDQLVERLVEKEGQ), and 711–732 (TDRPLEKEEDQRVERLIEKEGQ). Position 737 is a phosphoserine (S737). Basic and acidic residues predominate over residues 744–773 (ETYRLLEKENGEPLKPVEEEDQRVERLIEK). A phosphoserine mark is found at S803 and S824. The disordered stretch occupies residues 866–900 (ESLLKKGTQESLESHEDRNQETQDPQRFLEEEGQG). Positions 868-886 (LLKKGTQESLESHEDRNQE) are enriched in basic and acidic residues. Residues S915 and S957 each carry the phosphoserine modification. The interval 945-998 (SLLERESQDSGKSLEGQEAFRCLGKEDPESLQFPEVQDQEIQRSLQQETQQTLG) is disordered. Positions 986–997 (QRSLQQETQQTL) are enriched in polar residues. K1043 is covalently cross-linked (Glycyl lysine isopeptide (Lys-Gly) (interchain with G-Cter in SUMO1); alternate). Residue K1043 forms a Glycyl lysine isopeptide (Lys-Gly) (interchain with G-Cter in SUMO2); alternate linkage. Phosphoserine is present on residues S1052, S1063, S1073, S1123, S1134, S1162, and S1238. Disordered regions lie at residues 1134–1262 (SPEA…LEGQ) and 1334–1818 (HPSL…SGED). Composition is skewed to basic and acidic residues over residues 1342–1361 (VEAKIAHDLEGPGKEPKEAG) and 1401–1416 (ASDHEGSDAPEPRPSE). A compositionally biased stretch (acidic residues) spans 1490-1505 (QDWEESREESEADELG). Phosphoserine is present on residues S1495, S1499, and S1523. The segment covering 1570–1579 (LSSEEFEDLG) has biased composition (acidic residues). 2 positions are modified to phosphoserine: S1614 and S1623. Over residues 1616–1636 (GFADEEESGEEGEEEEHEDGT) the composition is skewed to acidic residues. The segment covering 1686–1697 (GLETESQDSAEP) has biased composition (polar residues). 5 positions are modified to phosphoserine: S1698, S1700, S1791, S1814, and S1815. Residues 1698–1708 (SGSEVSESVSS) are compositionally biased toward low complexity.

The protein belongs to the intermediate filament family. Interacts with FHOD3. Forms homodimers and homotetramers in vitro. In mixtures with other intermediate filament proteins such as vimentin and alpha-internexin, preferentially forms heterodimers which can assemble to form intermediate filaments if nestin does not exceed 25%. Post-translationally, constitutively phosphorylated. This increases during mitosis when the cytoplasmic intermediate filament network is reorganized.

In terms of biological role, required for brain and eye development. Promotes the disassembly of phosphorylated vimentin intermediate filaments (IF) during mitosis and may play a role in the trafficking and distribution of IF proteins and other cellular factors to daughter cells during progenitor cell division. Required for survival, renewal and mitogen-stimulated proliferation of neural progenitor cells. The protein is Nestin of Mesocricetus auratus (Golden hamster).